Here is a 163-residue protein sequence, read N- to C-terminus: ATP synthase subunit b (163 aa).

A helical membrane pass occupies residues 10–29 (VFMQMFHFLLMLVVLRLFAY).

This sequence belongs to the ATPase B chain family. In terms of assembly, F-type ATPases have 2 components, F(1) - the catalytic core - and F(0) - the membrane proton channel. F(1) has five subunits: alpha(3), beta(3), gamma(1), delta(1), epsilon(1). F(0) has three main subunits: a(1), b(2) and c(10-14). The alpha and beta chains form an alternating ring which encloses part of the gamma chain. F(1) is attached to F(0) by a central stalk formed by the gamma and epsilon chains, while a peripheral stalk is formed by the delta and b chains.

It localises to the cell membrane. Its function is as follows. F(1)F(0) ATP synthase produces ATP from ADP in the presence of a proton or sodium gradient. F-type ATPases consist of two structural domains, F(1) containing the extramembraneous catalytic core and F(0) containing the membrane proton channel, linked together by a central stalk and a peripheral stalk. During catalysis, ATP synthesis in the catalytic domain of F(1) is coupled via a rotary mechanism of the central stalk subunits to proton translocation. Component of the F(0) channel, it forms part of the peripheral stalk, linking F(1) to F(0). This Desulforudis audaxviator (strain MP104C) protein is ATP synthase subunit b.